The sequence spans 55 residues: NPDCLLPIKTGPCKGSFPRYAYDSSEDKCVEFIYGGCQANANNFETIEECEAACL.

The region spanning 4–54 is the BPTI/Kunitz inhibitor domain; that stretch reads CLLPIKTGPCKGSFPRYAYDSSEDKCVEFIYGGCQANANNFETIEECEAAC. 3 disulfide bridges follow: Cys-4–Cys-54, Cys-13–Cys-37, and Cys-29–Cys-50.

As to quaternary structure, monomer. Expressed exclusively in the middle silk gland.

Its function is as follows. This cocoon shell-associated protein inhibits trypsin Activity by forming a low-dissociation complex with trypsin. May play an important part in regulating proteolytic activity in the silk gland or protecting silk proteins from degradation during histolysis. The sequence is that of Trypsin inhibitor from Bombyx mori (Silk moth).